We begin with the raw amino-acid sequence, 104 residues long: NADH-quinone oxidoreductase subunit K (104 aa).

The next 3 membrane-spanning stretches (helical) occupy residues 4–24 (VAYYLVLSAILFSIGVGAFLI), 28–48 (IITIFMSIELMLNAVNLSFVA), and 64–84 (IFVFFVMVVAAAEAAVGLAII).

It belongs to the complex I subunit 4L family. As to quaternary structure, NDH-1 is composed of 14 different subunits. Subunits NuoA, H, J, K, L, M, N constitute the membrane sector of the complex.

It localises to the cell inner membrane. It catalyses the reaction a quinone + NADH + 5 H(+)(in) = a quinol + NAD(+) + 4 H(+)(out). Its function is as follows. NDH-1 shuttles electrons from NADH, via FMN and iron-sulfur (Fe-S) centers, to quinones in the respiratory chain. The immediate electron acceptor for the enzyme in this species is believed to be ubiquinone. Couples the redox reaction to proton translocation (for every two electrons transferred, four hydrogen ions are translocated across the cytoplasmic membrane), and thus conserves the redox energy in a proton gradient. This Acidobacterium capsulatum (strain ATCC 51196 / DSM 11244 / BCRC 80197 / JCM 7670 / NBRC 15755 / NCIMB 13165 / 161) protein is NADH-quinone oxidoreductase subunit K.